A 153-amino-acid chain; its full sequence is Regulator of sigma D (153 aa).

It belongs to the Rsd/AlgQ family. In terms of assembly, interacts with RpoD.

Its subcellular location is the cytoplasm. Its function is as follows. Binds RpoD and negatively regulates RpoD-mediated transcription activation by preventing the interaction between the primary sigma factor RpoD with the catalytic core of the RNA polymerase and with promoter DNA. May be involved in replacement of the RNA polymerase sigma subunit from RpoD to RpoS during the transition from exponential growth to the stationary phase. In Pectobacterium atrosepticum (strain SCRI 1043 / ATCC BAA-672) (Erwinia carotovora subsp. atroseptica), this protein is Regulator of sigma D.